A 775-amino-acid polypeptide reads, in one-letter code: MGGNKKESYKKTSLGSKAKGPEKPSCSSARKHQSEPMSKSPIASTSAAAANVTPAKTFAHAVATGSNPGQVTAGVEKLTRKHGVRCLMSSTHGIEAYIKAAAEVVGHSAVVAASKMYGKAIIFARTLTAVHTLVQRGITVGGSYVPVEPLEGLGTRVVLSNVPPFLQDHLLYPHLQALGELKSNMSRIPLGCKESRLRHVLSFKRQVQLLLPRGQDTIEGSFGVPFEGVLYKIFYSTEEVRCFLCKNLGHTRQSCPKGQIKTTAPVPAPSASNKTSYPAGTISAGSSKGISPSLKNLKVAVTQPTSTTSKPPPSSLKTSKAAACLTIAAKEKGGKHVKASPRVTVVPITKKCTPVMGTPEGVGVPMIATSVGVGADSGLSSSDAKKKRKFKSNWLVPEEWASVVNDGAPPSKGKKGSKTSAPHVVTLSGPTVGHDQPVSDHALLPPDQVGNNEVNGLHGLEHGSVGFPTESGVQYLPQNHLEDLPLECKETPNETPAEWAVSVPEVLRFGNCNQPQFLVPQGISLQEGENIGLTPIQDPADKTAGKDGEGGVVDTEEGSQTTSTVHAKISLPLSSTDPNVIAIQKAQEVVERAEANHRASKALPVAGELISSVAPVSNTSKCVSSEVEGTPEPLQGLQKSDSDTFPATTCGEILKALVERGDYQSLSQEELMDEGNIEEEVDIGVANPSTPIIPAEELKKFLESTLGVKLEKKMHMALEKWHDLPLVINSVRQYIKVIKEAKNYGTAEYLRIMKFHKKCLSHQTLMKVKALPKTQ.

The span at 1–10 (MGGNKKESYK) shows a compositional bias: basic and acidic residues. 3 disordered regions span residues 1–46 (MGGN…ASTS), 256–277 (PKGQ…KTSY), and 535–565 (PIQD…TSTV). Polar residues predominate over residues 35 to 46 (EPMSKSPIASTS). Positions 539–549 (PADKTAGKDGE) are enriched in basic and acidic residues.

The sequence is that of Transposon TX1 uncharacterized 82 kDa protein from Xenopus laevis (African clawed frog).